The primary structure comprises 487 residues: N-succinylglutamate 5-semialdehyde dehydrogenase (487 aa).

Residue 221–226 (GSSDTG) coordinates NAD(+). Active-site residues include Glu-244 and Cys-278.

Belongs to the aldehyde dehydrogenase family. AstD subfamily.

The enzyme catalyses N-succinyl-L-glutamate 5-semialdehyde + NAD(+) + H2O = N-succinyl-L-glutamate + NADH + 2 H(+). It participates in amino-acid degradation; L-arginine degradation via AST pathway; L-glutamate and succinate from L-arginine: step 4/5. In terms of biological role, catalyzes the NAD-dependent reduction of succinylglutamate semialdehyde into succinylglutamate. The sequence is that of N-succinylglutamate 5-semialdehyde dehydrogenase from Burkholderia ambifaria (strain MC40-6).